Here is a 264-residue protein sequence, read N- to C-terminus: Caffeoyl-CoA O-methyltransferase 2 (264 aa).

Residues 1–20 (MATTATEATKTTAPAQEQQA) show a composition bias toward low complexity. The interval 1–37 (MATTATEATKTTAPAQEQQANGNGNGEQKTRHSEVGH) is disordered. The segment covering 28 to 37 (QKTRHSEVGH) has biased composition (basic and acidic residues). Substrate is bound at residue lysine 38. Residues threonine 80, glutamate 102, 104–105 (GV), serine 110, aspartate 128, and alanine 157 each bind S-adenosyl-L-methionine. Residue aspartate 180 coordinates substrate. Position 180 (aspartate 180) interacts with a divalent metal cation. An S-adenosyl-L-methionine-binding site is contributed by aspartate 182. A divalent metal cation is bound by residues aspartate 206 and asparagine 207. Asparagine 211 lines the substrate pocket.

Belongs to the class I-like SAM-binding methyltransferase superfamily. Cation-dependent O-methyltransferase family. CCoAMT subfamily. A divalent metal cation is required as a cofactor.

The catalysed reaction is (E)-caffeoyl-CoA + S-adenosyl-L-methionine = (E)-feruloyl-CoA + S-adenosyl-L-homocysteine + H(+). Its pathway is aromatic compound metabolism; phenylpropanoid biosynthesis. Its function is as follows. Methylates caffeoyl-CoA to feruloyl-CoA and 5-hydroxyferuloyl-CoA to sinapoyl-CoA. Plays a role in the synthesis of feruloylated polysaccharides. Involved in the reinforcement of the plant cell wall. Also involved in the responding to wounding or pathogen challenge by the increased formation of cell wall-bound ferulic acid polymers. The chain is Caffeoyl-CoA O-methyltransferase 2 (CCOAOMT2) from Zea mays (Maize).